The chain runs to 61 residues: Large ribosomal subunit protein bL32 (61 aa).

The segment covering methionine 1–arginine 16 has biased composition (basic residues). The interval methionine 1–leucine 44 is disordered. Residues valine 28 to leucine 44 are compositionally biased toward basic and acidic residues.

This sequence belongs to the bacterial ribosomal protein bL32 family.

The protein is Large ribosomal subunit protein bL32 of Methylobacterium nodulans (strain LMG 21967 / CNCM I-2342 / ORS 2060).